The primary structure comprises 520 residues: Putative cytochrome P450 CYP13A3 (520 aa).

Cys-464 lines the heme pocket.

It belongs to the cytochrome P450 family. Heme is required as a cofactor.

In terms of biological role, cytochromes P450 are a group of heme-thiolate monooxygenases. They oxidize a variety of structurally unrelated compounds, including steroids, fatty acids, and xenobiotics. This is Putative cytochrome P450 CYP13A3 (cyp-13A3) from Caenorhabditis elegans.